Reading from the N-terminus, the 259-residue chain is Global transcriptional regulator CodY (259 aa).

Residues 1–155 are GAF domain; it reads MSLLSRMRKI…GATVVGMEIL (155 aa). The segment at residues 203–222 is a DNA-binding region (H-T-H motif); that stretch reads ASKIADRVGITRSVIVNALR. Ser-215 is subject to Phosphoserine.

Belongs to the CodY family.

Its subcellular location is the cytoplasm. DNA-binding global transcriptional regulator which is involved in the adaptive response to starvation and acts by directly or indirectly controlling the expression of numerous genes in response to nutrient availability. During rapid exponential growth, CodY is highly active and represses genes whose products allow adaptation to nutrient depletion. This chain is Global transcriptional regulator CodY, found in Halalkalibacterium halodurans (strain ATCC BAA-125 / DSM 18197 / FERM 7344 / JCM 9153 / C-125) (Bacillus halodurans).